Reading from the N-terminus, the 254-residue chain is Acetyl-coenzyme A carboxylase carboxyl transferase subunit beta (254 aa).

One can recognise a CoA carboxyltransferase N-terminal domain in the interval 1–254 (MWLRCPHCHQ…LLKTGSVANE (254 aa)). Zn(2+) contacts are provided by Cys-5, Cys-8, Cys-23, and Cys-26. The C4-type zinc finger occupies 5–26 (CPHCHQLLFAKQLTQYAVCPNC).

Belongs to the AccD/PCCB family. As to quaternary structure, acetyl-CoA carboxylase is a heterohexamer composed of biotin carboxyl carrier protein (AccB), biotin carboxylase (AccC) and two subunits each of ACCase subunit alpha (AccA) and ACCase subunit beta (AccD). Zn(2+) is required as a cofactor.

The protein resides in the cytoplasm. The enzyme catalyses N(6)-carboxybiotinyl-L-lysyl-[protein] + acetyl-CoA = N(6)-biotinyl-L-lysyl-[protein] + malonyl-CoA. Its pathway is lipid metabolism; malonyl-CoA biosynthesis; malonyl-CoA from acetyl-CoA: step 1/1. Its function is as follows. Component of the acetyl coenzyme A carboxylase (ACC) complex. Biotin carboxylase (BC) catalyzes the carboxylation of biotin on its carrier protein (BCCP) and then the CO(2) group is transferred by the transcarboxylase to acetyl-CoA to form malonyl-CoA. The polypeptide is Acetyl-coenzyme A carboxylase carboxyl transferase subunit beta (Limosilactobacillus reuteri (strain DSM 20016) (Lactobacillus reuteri)).